A 64-amino-acid chain; its full sequence is Conotoxin Ts-011 (64 aa).

A signal peptide spans 1-22 (MHCLPVLVILLLLIASTPSVDA). A propeptide spanning residues 23–52 (RPKTKDDVPPASFHGADDANRILQTLWNLR) is cleaved from the precursor. I63 is subject to Isoleucine amide.

The protein belongs to the conotoxin T superfamily. In terms of processing, contains 2 disulfide bonds that can be either 'C1-C3, C2-C4' or 'C1-C4, C2-C3', since these disulfide connectivities have been observed for conotoxins with cysteine framework V (for examples, see AC P0DQQ7 and AC P81755). Expressed by the venom duct.

Its subcellular location is the secreted. In Conus tessulatus (Tessellate cone), this protein is Conotoxin Ts-011.